The primary structure comprises 590 residues: Putative laccase-19 (590 aa).

Residues 1–28 (MEKLSMVTSLLCAITVAVLAVAVVSGEA) form the signal peptide. 2 Plastocyanin-like domains span residues 36 to 152 (VVHE…PRDG) and 161 to 315 (KDVP…YAGA). N-linked (GlcNAc...) asparagine glycans are attached at residues Asn-41 and Asn-47. Positions 86 and 88 each coordinate Cu cation. N-linked (GlcNAc...) asparagine glycosylation occurs at Asn-120. Cu cation-binding residues include His-131 and His-133. 6 N-linked (GlcNAc...) asparagine glycosylation sites follow: Asn-205, Asn-344, Asn-378, Asn-397, Asn-434, and Asn-465. The Plastocyanin-like 3 domain maps to 424–566 (DFPIRPPRPF…ATAFIVEDGP (143 aa)). Residues Asn-483, His-486, His-488, His-545, Cys-546, His-547, His-551, and Met-556 each coordinate Cu cation. Positions 565 to 590 (GPTPETSLPPPPPEFKRCGNNGLSQP) are disordered.

It belongs to the multicopper oxidase family. Cu cation serves as cofactor.

Its subcellular location is the secreted. It localises to the extracellular space. The protein resides in the apoplast. The enzyme catalyses 4 hydroquinone + O2 = 4 benzosemiquinone + 2 H2O. Its function is as follows. Lignin degradation and detoxification of lignin-derived products. In Oryza sativa subsp. indica (Rice), this protein is Putative laccase-19 (LAC19).